The primary structure comprises 798 residues: Penicillin-binding protein 1A (798 aa).

The Cytoplasmic segment spans residues 1 to 9; it reads MIKKIITTC. Residues 10–30 traverse the membrane as a helical; Signal-anchor for type II membrane protein segment; that stretch reads MGLNNGLALFGVGLIAIAILV. At 31-798 the chain is on the periplasmic side; it reads TYPKLPSLDS…NNRQQLDSLF (768 aa). Residues 50–218 are transglycosylase; that stretch reads LTIYSSDGQV…SAYNPIVNPE (169 aa). Residue glutamate 88 is the Proton donor; for transglycosylase activity of the active site. The interval 413-699 is transpeptidase; sequence TVVQEPLLQG…GTIAVPVWVE (287 aa). Serine 460 acts as the Acyl-ester intermediate; for transpeptidase activity in catalysis. The interval 734–798 is disordered; that stretch reads TSSDLALDNS…NNRQQLDSLF (65 aa). Polar residues predominate over residues 782-798; sequence LPSNTGNNNRQQLDSLF.

It in the N-terminal section; belongs to the glycosyltransferase 51 family. The protein in the C-terminal section; belongs to the transpeptidase family.

The protein localises to the cell inner membrane. It catalyses the reaction [GlcNAc-(1-&gt;4)-Mur2Ac(oyl-L-Ala-gamma-D-Glu-L-Lys-D-Ala-D-Ala)](n)-di-trans,octa-cis-undecaprenyl diphosphate + beta-D-GlcNAc-(1-&gt;4)-Mur2Ac(oyl-L-Ala-gamma-D-Glu-L-Lys-D-Ala-D-Ala)-di-trans,octa-cis-undecaprenyl diphosphate = [GlcNAc-(1-&gt;4)-Mur2Ac(oyl-L-Ala-gamma-D-Glu-L-Lys-D-Ala-D-Ala)](n+1)-di-trans,octa-cis-undecaprenyl diphosphate + di-trans,octa-cis-undecaprenyl diphosphate + H(+). It carries out the reaction Preferential cleavage: (Ac)2-L-Lys-D-Ala-|-D-Ala. Also transpeptidation of peptidyl-alanyl moieties that are N-acyl substituents of D-alanine.. It participates in cell wall biogenesis; peptidoglycan biosynthesis. In terms of biological role, cell wall formation. Synthesis of cross-linked peptidoglycan from the lipid intermediates. The enzyme has a penicillin-insensitive transglycosylase N-terminal domain (formation of linear glycan strands) and a penicillin-sensitive transpeptidase C-terminal domain (cross-linking of the peptide subunits). The polypeptide is Penicillin-binding protein 1A (mrcA) (Neisseria flavescens).